A 679-amino-acid chain; its full sequence is Methionine--tRNA ligase (679 aa).

A 'HIGH' region motif is present at residues 12–22; the sequence is PYANGPIHIGH. 4 residues coordinate Zn(2+): cysteine 143, cysteine 146, cysteine 156, and cysteine 158. A 'KMSKS' region motif is present at residues 328–332; the sequence is KMSKS. Lysine 331 contacts ATP. The tract at residues 537–564 is disordered; the sequence is MMEESKDEAAQETGAAATNPFNDSDQPL. In terms of domain architecture, tRNA-binding spans 577–679; that stretch reads DFMKVDLRVA…EGALPGQRVH (103 aa).

The protein belongs to the class-I aminoacyl-tRNA synthetase family. MetG type 1 subfamily. Homodimer. It depends on Zn(2+) as a cofactor.

The protein resides in the cytoplasm. It catalyses the reaction tRNA(Met) + L-methionine + ATP = L-methionyl-tRNA(Met) + AMP + diphosphate. Is required not only for elongation of protein synthesis but also for the initiation of all mRNA translation through initiator tRNA(fMet) aminoacylation. This chain is Methionine--tRNA ligase, found in Rhodopirellula baltica (strain DSM 10527 / NCIMB 13988 / SH1).